Reading from the N-terminus, the 138-residue chain is ATP synthase epsilon chain (138 aa).

It belongs to the ATPase epsilon chain family. In terms of assembly, F-type ATPases have 2 components, CF(1) - the catalytic core - and CF(0) - the membrane proton channel. CF(1) has five subunits: alpha(3), beta(3), gamma(1), delta(1), epsilon(1). CF(0) has three main subunits: a, b and c.

Its subcellular location is the cell membrane. In terms of biological role, produces ATP from ADP in the presence of a proton gradient across the membrane. This chain is ATP synthase epsilon chain, found in Streptococcus gordonii (strain Challis / ATCC 35105 / BCRC 15272 / CH1 / DL1 / V288).